Consider the following 342-residue polypeptide: Holliday junction branch migration complex subunit RuvB (342 aa).

Residues 1–185 (MTVKPLRDVT…FPIQERLEYY (185 aa)) are large ATPase domain (RuvB-L). ATP is bound by residues Leu24, Arg25, Gly66, Lys69, Thr70, Ser71, 132-134 (EDY), Arg175, Tyr185, and Arg222. Thr70 is a Mg(2+) binding site. Positions 186-256 (GPAELKEIAV…VVDRTLRRLE (71 aa)) are small ATPAse domain (RuvB-S). The tract at residues 259–342 (ARGLDAMDRR…RSGGKQGSLV (84 aa)) is head domain (RuvB-H). Arg314 and Arg319 together coordinate DNA.

This sequence belongs to the RuvB family. In terms of assembly, homohexamer. Forms an RuvA(8)-RuvB(12)-Holliday junction (HJ) complex. HJ DNA is sandwiched between 2 RuvA tetramers; dsDNA enters through RuvA and exits via RuvB. An RuvB hexamer assembles on each DNA strand where it exits the tetramer. Each RuvB hexamer is contacted by two RuvA subunits (via domain III) on 2 adjacent RuvB subunits; this complex drives branch migration. In the full resolvosome a probable DNA-RuvA(4)-RuvB(12)-RuvC(2) complex forms which resolves the HJ.

Its subcellular location is the cytoplasm. The enzyme catalyses ATP + H2O = ADP + phosphate + H(+). In terms of biological role, the RuvA-RuvB-RuvC complex processes Holliday junction (HJ) DNA during genetic recombination and DNA repair, while the RuvA-RuvB complex plays an important role in the rescue of blocked DNA replication forks via replication fork reversal (RFR). RuvA specifically binds to HJ cruciform DNA, conferring on it an open structure. The RuvB hexamer acts as an ATP-dependent pump, pulling dsDNA into and through the RuvAB complex. RuvB forms 2 homohexamers on either side of HJ DNA bound by 1 or 2 RuvA tetramers; 4 subunits per hexamer contact DNA at a time. Coordinated motions by a converter formed by DNA-disengaged RuvB subunits stimulates ATP hydrolysis and nucleotide exchange. Immobilization of the converter enables RuvB to convert the ATP-contained energy into a lever motion, pulling 2 nucleotides of DNA out of the RuvA tetramer per ATP hydrolyzed, thus driving DNA branch migration. The RuvB motors rotate together with the DNA substrate, which together with the progressing nucleotide cycle form the mechanistic basis for DNA recombination by continuous HJ branch migration. Branch migration allows RuvC to scan DNA until it finds its consensus sequence, where it cleaves and resolves cruciform DNA. The polypeptide is Holliday junction branch migration complex subunit RuvB (Anaeromyxobacter dehalogenans (strain 2CP-C)).